The sequence spans 236 residues: Reticulon-3 (236 aa).

Residues 1–24 (MAEPSAATQSPSISSSSSGAEPSA) show a composition bias toward low complexity. Residues 1-31 (MAEPSAATQSPSISSSSSGAEPSAPGGGGSP) form a disordered region. Position 2 is an N-acetylalanine (Ala2). Topologically, residues 2–67 (AEPSAATQSP…KKTGFVFGTT (66 aa)) are cytoplasmic. Ser30 carries the post-translational modification Phosphoserine. The Reticulon domain occupies 48 to 236 (VHDLIFWRDV…LPGIAKKKAE (189 aa)). Residues 68-91 (LIMLLSLAAFSVISVVSYLILALL) constitute an intramembrane region (helical). Over 92–151 (SVTISFRIYKSVIQAVQKSEEGHPFKAYLDVDITLSSEAFHNYMNAAMVHINRALKLIIR) the chain is Cytoplasmic. Residues 152–172 (LFLVEDLVDSLKLAVFMWLMT) constitute an intramembrane region (helical). Residues 173–176 (YVGA) lie on the Cytoplasmic side of the membrane. The helical intramembrane region spans 177–197 (VFNGITLLILAELLIFSVPIV). Residues 191-236 (IFSVPIVYEKYKTQIDHYVGIARDQTKSIVEKIQAKLPGIAKKKAE) form an interaction with FADD region. The Cytoplasmic portion of the chain corresponds to 198-236 (YEKYKTQIDHYVGIARDQTKSIVEKIQAKLPGIAKKKAE). An interaction with BACE1 region spans residues 204 to 206 (QID).

Homodimer. Interacts with RTN4. Interacts with BACE1, BACE2, BCL2 and FADD. Interacts with ATL1 and ATL2. Interacts with TMEM33. Interacts with ZFYVE27 and with KIF5A in a ZFYVE27-dependent manner. Interacts with RIGI. Interacts with TRIM25.

It is found in the endoplasmic reticulum membrane. The protein localises to the golgi apparatus membrane. Its function is as follows. May be involved in membrane trafficking in the early secretory pathway. Inhibits BACE1 activity and amyloid precursor protein processing. May induce caspase-8 cascade and apoptosis. May favor BCL2 translocation to the mitochondria upon endoplasmic reticulum stress. Induces the formation of endoplasmic reticulum tubules. Acts also as an inflammation-resolving regulator by interacting with both TRIM25 and RIGI, subsequently impairing RIGI 'Lys-63'-linked polyubiquitination leading to IRF3 and NF-kappa-B inhibition. The polypeptide is Reticulon-3 (RTN3) (Pongo abelii (Sumatran orangutan)).